The following is a 512-amino-acid chain: Gustatory and odorant receptor 63a (512 aa).

Residues 1–24 are disordered; it reads MRPSGEKVVKGHGQGNSGHSLSGM. Topologically, residues 1 to 129 are cytoplasmic; the sequence is MRPSGEKVVK…PARAKFEMNS (129 aa). Residues 130–150 traverse the membrane as a helical segment; the sequence is ASFIYSVVFFVLLACYVGYVA. Residues 151-166 lie on the Extracellular side of the membrane; sequence NNRIHIVRSLSGPFEE. Residues 167-187 form a helical membrane-spanning segment; sequence AVIAYLFLVNILPIMIIPILW. Over 188 to 222 the chain is Cytoplasmic; sequence YEARKIAKLFNDWDDFEVLYYQISGHSLPLKLRQK. Residues 223 to 243 form a helical membrane-spanning segment; that stretch reads AVYIAIVLPILSVLSVVITHV. Residues 244-265 lie on the Extracellular side of the membrane; the sequence is TMSDLNINQVVPYCILDNLTAM. Residue Asn261 is glycosylated (N-linked (GlcNAc...) asparagine). A helical transmembrane segment spans residues 266–285; sequence LGAWWFLICEAMSITAHLLA. Residues 286 to 324 lie on the Cytoplasmic side of the membrane; sequence ERFQKALKHIGPAAMVADYRVLWLRLSKLTRDTGNALCY. The chain crosses the membrane as a helical span at residues 325–345; that stretch reads TFVFMSLYLFFIITLSIYGLM. Topologically, residues 346–350 are extracellular; sequence SQLSE. Residues 351–371 form a helical membrane-spanning segment; sequence GFGIKDIGLTITALWNIGLLF. Residues 372-436 are Cytoplasmic-facing; sequence YICDEAHYAS…FFDVNRTLFK (65 aa). A helical membrane pass occupies residues 437–457; that stretch reads GLLTTMVTYLVVLLQFQISIP. The Extracellular segment spans residues 458–512; that stretch reads TDKGDSEGANNITVVDFVMDSLDNDMSLMGASTLSTTTVGTTLPPPIMKLKGRKG. An N-linked (GlcNAc...) asparagine glycan is attached at Asn468.

Belongs to the insect chemoreceptor superfamily. Gustatory receptor (GR) family. Gr21a subfamily. As to quaternary structure, gr21a and Gr63a probably form a heterodimer that responds to CO(2). In terms of tissue distribution, expressed in the medial aspect of the third antennal segment. Carbon dioxide-responsive neurons coexpress Gr21a and Gr63a in a pair of chemosensory receptors at both larval and adult life stages.

The protein localises to the cell membrane. Its function is as follows. Gustatory and odorant receptor which mediates acceptance or avoidance behavior, depending on its substrates. Gr21a and Gr63a together are sufficient for carbon dioxide detection and avoidance behavior. It is possible that the CO(2) receptors Gr63a and Gr21a activate the TRPC channels through Galpha49B and Plc21C. This innate olfactory avoidance behavior can be inhibited by inhibitory interactions of the odors such as 1-hexanol and 2,3-butanedione with Gr21a and Gr63a. The sequence is that of Gustatory and odorant receptor 63a (Gr63a) from Drosophila melanogaster (Fruit fly).